An 84-amino-acid polypeptide reads, in one-letter code: Large ribosomal subunit protein bL27 (84 aa).

The disordered stretch occupies residues 1–20 (MAHKKAGGSTRNGRDSNPKY).

The protein belongs to the bacterial ribosomal protein bL27 family.

In Francisella tularensis subsp. tularensis (strain FSC 198), this protein is Large ribosomal subunit protein bL27.